Here is a 602-residue protein sequence, read N- to C-terminus: UvrABC system protein C (602 aa).

The GIY-YIG domain occupies 15-92 (DLPGSYQMKD…IQKYQPYYNI (78 aa)). Residues 197–232 (GKAKASLTAKMERAAKNLQFERAAEIRDQLHYIEQT) form the UVR domain.

This sequence belongs to the UvrC family. As to quaternary structure, interacts with UvrB in an incision complex.

The protein localises to the cytoplasm. Its function is as follows. The UvrABC repair system catalyzes the recognition and processing of DNA lesions. UvrC both incises the 5' and 3' sides of the lesion. The N-terminal half is responsible for the 3' incision and the C-terminal half is responsible for the 5' incision. The sequence is that of UvrABC system protein C from Lacticaseibacillus paracasei (strain ATCC 334 / BCRC 17002 / CCUG 31169 / CIP 107868 / KCTC 3260 / NRRL B-441) (Lactobacillus paracasei).